Reading from the N-terminus, the 371-residue chain is MESNRDEAERCVRIGKAAIEAGDKEKARRFFSKAERLYPSSEARVLLDALEKNDTAGNGPQSEKMSKSTEQPKAEKDSSGDTGKGHTQDQVDGVQRIKKCKTYYEVLGVSPDAGEEDLKKAYRKLALKFHPDKNHAPGATEAFKKIGNAYAVLSNPEKRKQYDLTGSEDNVQNNHRNGGFDYHRGFEADITPEDLFNMFFGGGFPSGSVHTFSNGRTRYSHHQHHHHSGHDREEERADGGFSMFIQLMPIIVLILVSLLSQLMVSNPPYSLYPRSGQTIKRVTENLQISYYVSKDFKSEYNGMLLQKLEKNIEEDYVANVRNNCWRERQQKQDLLHAAKVYRDERLRMKAESISMENCKELNRLTSLFRGG.

The Cytoplasmic segment spans residues 1-238; it reads MESNRDEAER…GHDREEERAD (238 aa). Residues 8–41 form a TPR repeat; it reads AERCVRIGKAAIEAGDKEKARRFFSKAERLYPSS. A disordered region spans residues 48–92; that stretch reads DALEKNDTAGNGPQSEKMSKSTEQPKAEKDSSGDTGKGHTQDQVD. Basic and acidic residues predominate over residues 64 to 89; the sequence is KMSKSTEQPKAEKDSSGDTGKGHTQD. Residues 102–166 form the J domain; that stretch reads TYYEVLGVSP…EKRKQYDLTG (65 aa). The tract at residues 215 to 235 is disordered; it reads GRTRYSHHQHHHHSGHDREEE. The segment covering 218–229 has biased composition (basic residues); sequence RYSHHQHHHHSG. The chain crosses the membrane as a helical span at residues 239–259; it reads GGFSMFIQLMPIIVLILVSLL. Over 260 to 371 the chain is Lumenal; sequence SQLMVSNPPY…NRLTSLFRGG (112 aa).

This sequence belongs to the DnaJ family. DNAJB12/DNAJB14 subfamily.

It is found in the endoplasmic reticulum membrane. Its function is as follows. Acts as a co-chaperone with HSPA8/Hsc70; required to promote protein folding and trafficking, prevent aggregation of client proteins, and promote unfolded proteins to endoplasmic reticulum-associated degradation (ERAD) pathway. Acts by determining hspa8/Hsc70's ATPase and polypeptide-binding activities. Can also act independently of hspa8/Hsc70: together with dnajb12, acts as a chaperone that promotes maturation of potassium channels by stabilizing nascent channel subunits and assembling them into tetramers. While stabilization of nascent channel proteins is dependent on hspa8/Hsc70, the process of oligomerization of channel subunits is independent of hspa8/Hsc70. This chain is DnaJ homolog subfamily B member 14 (dnajb14), found in Xenopus laevis (African clawed frog).